Consider the following 414-residue polypeptide: Imidazolonepropionase (414 aa).

The Fe(3+) site is built by His-73 and His-75. The Zn(2+) site is built by His-73 and His-75. Arg-82, Tyr-145, and His-178 together coordinate 4-imidazolone-5-propanoate. Tyr-145 lines the N-formimidoyl-L-glutamate pocket. His-249 contacts Fe(3+). Residue His-249 participates in Zn(2+) binding. A 4-imidazolone-5-propanoate-binding site is contributed by Gln-252. Asp-324 is a Fe(3+) binding site. A Zn(2+)-binding site is contributed by Asp-324. Asn-326 and Gly-328 together coordinate N-formimidoyl-L-glutamate. Position 329 (Ser-329) interacts with 4-imidazolone-5-propanoate.

Belongs to the metallo-dependent hydrolases superfamily. HutI family. Zn(2+) is required as a cofactor. Fe(3+) serves as cofactor.

It localises to the cytoplasm. It catalyses the reaction 4-imidazolone-5-propanoate + H2O = N-formimidoyl-L-glutamate. It participates in amino-acid degradation; L-histidine degradation into L-glutamate; N-formimidoyl-L-glutamate from L-histidine: step 3/3. Functionally, catalyzes the hydrolytic cleavage of the carbon-nitrogen bond in imidazolone-5-propanoate to yield N-formimidoyl-L-glutamate. It is the third step in the universal histidine degradation pathway. The chain is Imidazolonepropionase from Shewanella pealeana (strain ATCC 700345 / ANG-SQ1).